The primary structure comprises 244 residues: Phosphoadenosine 5'-phosphosulfate reductase (244 aa).

Residue C239 is the Nucleophile; cysteine thiosulfonate intermediate of the active site.

Belongs to the PAPS reductase family. CysH subfamily.

It is found in the cytoplasm. The enzyme catalyses [thioredoxin]-disulfide + sulfite + adenosine 3',5'-bisphosphate + 2 H(+) = [thioredoxin]-dithiol + 3'-phosphoadenylyl sulfate. The protein operates within sulfur metabolism; hydrogen sulfide biosynthesis; sulfite from sulfate: step 3/3. Functionally, catalyzes the formation of sulfite from phosphoadenosine 5'-phosphosulfate (PAPS) using thioredoxin as an electron donor. This Sodalis glossinidius (strain morsitans) protein is Phosphoadenosine 5'-phosphosulfate reductase.